A 559-amino-acid polypeptide reads, in one-letter code: Formate--tetrahydrofolate ligase (559 aa).

68 to 75 (TPAGEGKT) provides a ligand contact to ATP.

This sequence belongs to the formate--tetrahydrofolate ligase family.

The catalysed reaction is (6S)-5,6,7,8-tetrahydrofolate + formate + ATP = (6R)-10-formyltetrahydrofolate + ADP + phosphate. The protein operates within one-carbon metabolism; tetrahydrofolate interconversion. The protein is Formate--tetrahydrofolate ligase of Sinorhizobium fredii (strain NBRC 101917 / NGR234).